A 217-amino-acid polypeptide reads, in one-letter code: Vesicle transport through interaction with t-SNAREs homolog 1A (217 aa).

Topologically, residues 1-192 (MDVFERTEQN…TGIARRLATN (192 aa)) are cytoplasmic. Positions 36-97 (AVREVENDID…AQLQSSNQTN (62 aa)) form a coiled coil. Residues 90 to 109 (LQSSNQTNSNPWSNAPDDYQ) form a disordered region. One can recognise a t-SNARE coiled-coil homology domain in the interval 123 to 185 (SNMLDSTSDR…KSARKIMTGI (63 aa)). A helical; Anchor for type IV membrane protein membrane pass occupies residues 193–213 (KVILSIIILLLMGIIALIICL). The Vesicular segment spans residues 214–217 (KWLR).

This sequence belongs to the VTI1 family. As to quaternary structure, component of the SNARE complex composed of syn7A, syn8A, vamp7A and vti1A.

It is found in the membrane. The protein resides in the cytoplasmic vesicle. It localises to the secretory vesicle membrane. Its subcellular location is the clathrin-coated vesicle membrane. The protein localises to the endosome membrane. It is found in the endoplasmic reticulum membrane. Its function is as follows. V-SNARE that mediates vesicle transport pathways through interactions with t-SNAREs on the target membrane. These interactions are proposed to mediate aspects of the specificity of vesicle trafficking and to promote fusion of the lipid bilayers. In Dictyostelium discoideum (Social amoeba), this protein is Vesicle transport through interaction with t-SNAREs homolog 1A.